Here is a 493-residue protein sequence, read N- to C-terminus: MGLDAVKAKGNWKSEKPKETENKNHKKKNGDDNKSRNEEEEEGEASGCWVKFRFMIGCIPSKSDLDASSSSIYGSNCTVTTMESKSANEKSNDQPVGQVSSTTTTSNAESSSSTPVISEELNISSHLRKFTFNDLKLSTRNFRPESLLGEGGFGCVFKGWIEENGTAPVKPGTGLTVAVKTLNPDGLQGHKEWLAEINFLGNLLHPNLVKLVGYCIEDDQRLLVYEFMPRGSLENHLFRRSLPLPWSIRMKIALGAAKGLSFLHEEALKPVIYRDFKTSNILLDADYNAKLSDFGLAKDAPDEGKTHVSTRVMGTYGYAAPEYVMTGHLTSKSDVYSFGVVLLEMLTGRRSMDKNRPNGEHNLVEWARPHLLDKRRFYRLLDPRLEGHFSIKGAQKVTQLAAQCLSRDPKIRPKMSDVVEALKPLPHLKDMASSSYYFQTMQAERLKNGSGRSQGFGSRNGQHQPVFRTLSSPHGSSPYRHQIPSPKPKGATT.

Disordered stretches follow at residues M1–E42 and S84–I117. G2 carries the N-myristoyl glycine lipid modification. Basic and acidic residues predominate over residues W12–N37. Residues S100–T114 are compositionally biased toward low complexity. T131 bears the Phosphothreonine mark. The Protein kinase domain maps to F142 to L428. ATP-binding positions include L148–V156 and K180. Y225 carries the phosphotyrosine modification. D275 (proton acceptor) is an active-site residue. A Phosphoserine modification is found at S279. T306 carries the phosphothreonine modification. A Phosphoserine modification is found at S309. A phosphothreonine mark is found at T310 and T315. Y323 is subject to Phosphotyrosine. Residues K447–T493 are disordered. A compositionally biased stretch (polar residues) spans S450–G475.

Belongs to the protein kinase superfamily. Ser/Thr protein kinase family. In terms of assembly, interacts with the Xanthomonas campestris effector XopAC/AvrAC. Interacts with SD129. Post-translationally, phosphorylated by SD129 at Thr-306 and Thr-310 in response to the pathogen-associated molecular pattern (PAMP) 3-OH-C10:0, a medium-chain 3-hydroxy fatty acid.

It localises to the cell membrane. It carries out the reaction L-seryl-[protein] + ATP = O-phospho-L-seryl-[protein] + ADP + H(+). The catalysed reaction is L-threonyl-[protein] + ATP = O-phospho-L-threonyl-[protein] + ADP + H(+). In terms of biological role, involved in chitin-triggered immune signaling and is required for reactive oxygen species (ROS) production. Acts downstream of SD129 in defense signaling triggered by the pathogen-associated molecular pattern (PAMP) 3-OH-C10:0, a medium-chain 3-hydroxy fatty acid. The polypeptide is Serine/threonine-protein kinase PBL34 (Arabidopsis thaliana (Mouse-ear cress)).